A 160-amino-acid polypeptide reads, in one-letter code: Cytochrome c-type biogenesis protein CcmE (160 aa).

Residues 1–8 lie on the Cytoplasmic side of the membrane; it reads MNPRRKKR. Residues 9–29 traverse the membrane as a helical; Signal-anchor for type II membrane protein segment; the sequence is LGVVLAILFGLSATIGLIIYA. Residues 30–160 lie on the Periplasmic side of the membrane; sequence LNQNMDLFYT…SQEQKQGSDQ (131 aa). Residues His128 and Tyr132 each contribute to the heme site.

This sequence belongs to the CcmE/CycJ family.

The protein localises to the cell inner membrane. Its function is as follows. Heme chaperone required for the biogenesis of c-type cytochromes. Transiently binds heme delivered by CcmC and transfers the heme to apo-cytochromes in a process facilitated by CcmF and CcmH. In Vibrio cholerae serotype O1 (strain ATCC 39541 / Classical Ogawa 395 / O395), this protein is Cytochrome c-type biogenesis protein CcmE.